A 487-amino-acid chain; its full sequence is b(0,+)-type amino acid transporter 1 (487 aa).

Residues 1–22 (MGETVPRRRREDEKSIQSDEPK) are disordered. Over 1 to 31 (MGETVPRRRREDEKSIQSDEPKTTSLQKEVG) the chain is Cytoplasmic. A Phosphoserine modification is found at Ser-18. A helical transmembrane segment spans residues 32 to 55 (LISGICIIVGTIIGSGIFISPKSV). 43–47 (IIGSG) lines the L-arginine pocket. The Extracellular portion of the chain corresponds to 56-62 (LSNTQAV). A helical membrane pass occupies residues 63-84 (GPCLIIWAACGVLGTLGALCFA). Residues 85-110 (ELGTMITKSGGEYPYLMEAFGPIPAY) lie on the Cytoplasmic side of the membrane. A helical transmembrane segment spans residues 111–137 (LFSWSSLLVMKPSSFAIICLSFSEYVA). The Extracellular segment spans residues 138 to 147 (TPFYSGCEPP). 2 consecutive transmembrane segments (helical) span residues 148 to 169 (KVVV…NSLS) and 170 to 193 (VRLG…IIII). Topologically, residues 194 to 217 (SGLVLLAQGNTKNFENSFEGAEVS) are extracellular. Residues 218–238 (VGAISLALYNGLWAYDGWNQL) form a helical membrane-spanning segment. Asp-233 is an L-arginine binding site. Residues 239-251 (NYITEELRNPFRN) lie on the Cytoplasmic side of the membrane. A helical transmembrane segment spans residues 252 to 274 (LPLAIIFGIPLVTVCYILINISY). Over 275-302 (FTVMTPTELLQSQAVAVTFGDRVLYPAS) the chain is Extracellular. A helical membrane pass occupies residues 303–325 (WIVPVFVAFSTIGAANGTCFTAG). The Cytoplasmic portion of the chain corresponds to 326-351 (RLVYVAGREGHMLKVLSYISVRRLTP). Transmembrane regions (helical) follow at residues 352 to 370 (APAI…IPGD) and 371 to 391 (INSL…LTIL). The Cytoplasmic portion of the chain corresponds to 392–410 (GLIVMRFTRKELERPIKVP). The helical transmembrane segment at 411-431 (IFIPILVTFIAAFLVLAPVIT) threads the bilayer. Residues 432–434 (NPA) lie on the Extracellular side of the membrane. The helical transmembrane segment at 435-450 (WEYLYCVLFILSGLVF) threads the bilayer. The Cytoplasmic segment spans residues 451 to 487 (YFLFVYYKFEWAQKISKPITMHLQMLMEVVPPEPDPK).

This sequence belongs to the amino acid-polyamine-organocation (APC) superfamily. As to quaternary structure, disulfide-linked heterodimer composed of the catalytic light chain subunit SLC7A9 and the heavy chain subunit. The heterodimer is the minimal functional unit. Assembles in heterotetramers (dimers of heterodimers) and higher order oligomers. Interacts with CAV1. Kidney and small intestine.

It is found in the apical cell membrane. It catalyses the reaction L-leucine(out) + L-arginine(in) = L-leucine(in) + L-arginine(out). The enzyme catalyses L-histidine(out) + L-arginine(in) = L-histidine(in) + L-arginine(out). It carries out the reaction L-arginine(in) + L-phenylalanine(out) = L-arginine(out) + L-phenylalanine(in). The catalysed reaction is L-cysteine(out) + L-arginine(in) = L-cysteine(in) + L-arginine(out). It catalyses the reaction L-cystine(out) + L-arginine(in) = L-cystine(in) + L-arginine(out). The enzyme catalyses L-lysine(out) + L-arginine(in) = L-lysine(in) + L-arginine(out). Functionally, mediates the electrogenic exchange between cationic amino acids and neutral amino acids, with a stoichiometry of 1:1. Has system b(0,+)-like activity with high affinity for extracellular cationic amino acids and L-cystine and lower affinity for intracellular neutral amino acids. Substrate exchange is driven by high concentration of intracellular neutral amino acids and the intracellular reduction of L-cystine to L-cysteine. Required for reabsorption of L-cystine and dibasic amino acids across the brush border membrane in renal proximal tubules. This is b(0,+)-type amino acid transporter 1 from Oryctolagus cuniculus (Rabbit).